A 181-amino-acid polypeptide reads, in one-letter code: Large ribosomal subunit protein uL5 (181 aa).

This sequence belongs to the universal ribosomal protein uL5 family. Part of the 50S ribosomal subunit; contacts the 5S rRNA and probably tRNA. Forms a bridge to the 30S subunit in the 70S ribosome.

Functionally, this is one of the proteins that bind and probably mediate the attachment of the 5S RNA into the large ribosomal subunit, where it forms part of the central protuberance. In the 70S ribosome it contacts protein S13 of the 30S subunit (bridge B1b), connecting the 2 subunits; this bridge is implicated in subunit movement. May contact the P site tRNA; the 5S rRNA and some of its associated proteins might help stabilize positioning of ribosome-bound tRNAs. The protein is Large ribosomal subunit protein uL5 of Methanococcus maripaludis (strain C6 / ATCC BAA-1332).